Here is a 372-residue protein sequence, read N- to C-terminus: Homoserine dehydrogenase (372 aa).

Residues V13, G15, V16, and T99 each coordinate NAD(+). 2 residues coordinate NADP(+): V16 and T99. 4 residues coordinate NADPH: V16, T99, S100, and K123. K123 lines the NADP(+) pocket. Na(+)-binding residues include E150, V153, A155, and L157. The NADP(+) site is built by G216 and E219. L-homoserine contacts are provided by E219 and D230. The active-site Proton donor is K234. G352 is an NAD(+) binding site. Residue G352 coordinates NADP(+). Residue G352 participates in NADPH binding.

This sequence belongs to the homoserine dehydrogenase family. In terms of assembly, homodimer. Requires a metal cation as cofactor.

The catalysed reaction is L-homoserine + NADP(+) = L-aspartate 4-semialdehyde + NADPH + H(+). The enzyme catalyses L-homoserine + NAD(+) = L-aspartate 4-semialdehyde + NADH + H(+). Its pathway is amino-acid biosynthesis; L-methionine biosynthesis via de novo pathway; L-homoserine from L-aspartate: step 3/3. The protein operates within amino-acid biosynthesis; L-threonine biosynthesis; L-threonine from L-aspartate: step 3/5. Functionally, catalyzes the conversion of L-aspartate-beta-semialdehyde (L-Asa) to L-homoserine (L-Hse), the third step in the biosynthesis of amino acids that derive from aspartate (the aspartate family of amino acids), including methioinine and threonine, the latter of which is a precursor to isoleucine; production of homoserine leads to a branch-point in the pathway as it can either be O-phosphorylated for processing to threonine, or O-acylated for processing to methionine. The protein is Homoserine dehydrogenase of Paracoccidioides brasiliensis (strain Pb18).